We begin with the raw amino-acid sequence, 508 residues long: Bestrophin-2 (508 aa).

Over 1–31 (MTVTYTARVANARFGGFSQLLLLWRGSIYKL) the chain is Cytoplasmic. Position 10 (A10) interacts with Ca(2+). Residues 32 to 51 (LWRELLCFLGLYMALSAAYR) traverse the membrane as a helical segment. Residues 52-60 (FLLAEEQKR) lie on the Extracellular side of the membrane. Residues 61–82 (YFEKLVIYCDQYASLIPVSFVL) form a helical membrane-spanning segment. Residues 83–238 (GFYVTLVVHR…WISIPLVYTQ (156 aa)) are Cytoplasmic-facing. Residues 239 to 255 (VVTIAVYSYFLACLIGR) traverse the membrane as a helical segment. At 256-274 (QFLDPAQGYKDHTLDLCVP) the chain is on the extracellular side. A helical membrane pass occupies residues 275-288 (IFTLLQFFFYAGWL). Residues 289-508 (KVAEQLINPF…PIGEEEESPA (220 aa)) are Cytoplasmic-facing. 4 residues coordinate Ca(2+): Q293, N296, D301, and D304. The disordered stretch occupies residues 455-508 (LREPELEPPACPEPPAPIPGPTPEPFTTVSIPGPRAPAPPWLPSPIGEEEESPA). Composition is skewed to pro residues over residues 461-478 (EPPACPEPPAPIPGPTPE) and 488-497 (PRAPAPPWLP).

Belongs to the anion channel-forming bestrophin (TC 1.A.46) family. Calcium-sensitive chloride channel subfamily. Pentamer. Interacts with GLUL; this interaction tethers a fraction of GLUL to the membrane, causing a decrease of cytosolic glutamine synthase (GS) activity and inhibits the chloride channel activity of BEST2 by affecting the gating at the aperture in the absence of intracellular glutamate. As to expression, expressed in mucin-secreting colonic goblet cells.

Its subcellular location is the cell membrane. The protein resides in the basolateral cell membrane. The enzyme catalyses chloride(in) = chloride(out). It catalyses the reaction hydrogencarbonate(in) = hydrogencarbonate(out). The catalysed reaction is L-glutamate(out) = L-glutamate(in). It carries out the reaction iodide(out) = iodide(in). The enzyme catalyses L-glutamine(out) = L-glutamine(in). With respect to regulation, chloride channel activity is allosterically inhibited by GLUL/glutamine synthase (GS) which affects the gating at the aperture in the absence of intracellular glutamate. Inhibitory effect of GLUL is relieved upon increasing of intracellular level of L-glutamate. Its function is as follows. Ligand-gated anion channel that allows the movement of anions across cell membranes when activated by calcium (Ca2+). Transports a large specter of anions, namely mediates the movement of chloride, L-glutamate and iodide. Calcium-binding triggers the dilation of the aperture, but calcium-dependent gating is only effective when the size of the passing anion is bigger than the closed aperture. Mediates the calcium-activated hydrogencarbonate movement and participates in colonic hydrogencarbonate secretion concomitant with mucin secretion. In non-pigmented epithelium (NPE), mediates the efflux of intracellular L-glutamate; binding of intracellular L-glutamate activates and open both the neck and the aperture of the channel, leading to L-glutamate exit promoting chloride influx movement from the extracellular side in trans. Also exhibits a directional permeability for intracellular glutamine, in a similar manner as for L-glutamate. This Mus musculus (Mouse) protein is Bestrophin-2.